Here is a 369-residue protein sequence, read N- to C-terminus: Isocitrate dehydrogenase [NAD] subunit 2, mitochondrial (369 aa).

Residues 1-15 constitute a mitochondrion transit peptide; sequence MLRNTFFRNTSRRFL. Position 105 is a phosphothreonine (T105). Residues R119, R129, and R150 each coordinate substrate. T153 carries the post-translational modification Phosphothreonine. Residue D237 participates in substrate binding. Mg(2+)-binding residues include D237, D263, and D267. Residues T327 and T349 each carry the phosphothreonine modification.

It belongs to the isocitrate and isopropylmalate dehydrogenases family. Octamer of two non-identical subunits IDH1 and IDH2. Mg(2+) is required as a cofactor. The cofactor is Mn(2+).

Its subcellular location is the mitochondrion matrix. It carries out the reaction D-threo-isocitrate + NAD(+) = 2-oxoglutarate + CO2 + NADH. Allosterically regulated by several compounds including AMP, NAD(+), and citrate. Its function is as follows. Performs an essential role in the oxidative function of the citric acid cycle. Also binds RNA; specifically to the 5'-untranslated leaders of mitochondrial mRNAs. This chain is Isocitrate dehydrogenase [NAD] subunit 2, mitochondrial (IDH2), found in Saccharomyces cerevisiae (strain ATCC 204508 / S288c) (Baker's yeast).